Here is a 481-residue protein sequence, read N- to C-terminus: RAC-beta serine/threonine-protein kinase (481 aa).

The residue at position 1 (Met-1) is an N-acetylmethionine. The region spanning 5 to 108 is the PH domain; the sequence is SVIKEGWLHK…WMRAIQMVAN (104 aa). The residue at position 34 (Ser-34) is a Phosphoserine. Cys-60 and Cys-77 are oxidised to a cystine. The residue at position 126 (Ser-126) is a Phosphoserine. Residues Ser-128 and Ser-131 are each glycosylated (O-linked (GlcNAc) serine). The region spanning 152-409 is the Protein kinase domain; sequence FDYLKLLGKG…AKEVMEHRFF (258 aa). ATP contacts are provided by residues 158-166 and Lys-181; that span reads LGKGTFGKV. Residue Asp-275 is the Proton acceptor of the active site. Mn(2+) is bound by residues Asn-280 and Asp-293. Residues Cys-297 and Cys-311 are joined by a disulfide bond. Thr-306 carries O-linked (GlcNAc) threonine glycosylation. Phosphothreonine; by PDPK1 is present on Thr-309. A glycan (O-linked (GlcNAc) threonine) is linked at Thr-313. Positions 410–481 constitute an AGC-kinase C-terminal domain; the sequence is LSINWQDVVQ…QFSYSASIRE (72 aa). Ser-447 bears the Phosphoserine mark. Position 451 is a phosphothreonine (Thr-451). Phosphoserine; by MTOR is present on residues Ser-474 and Ser-478. A glycan (O-linked (GlcNAc) serine; alternate) is linked at Ser-474.

The protein belongs to the protein kinase superfamily. AGC Ser/Thr protein kinase family. RAC subfamily. As to quaternary structure, interacts with BTBD10. Interacts with KCTD20. Interacts (via PH domain) with MTCP1, TCL1A and TCL1B; this interaction may facilitate AKT2 oligomerization and phosphorylation, hence increasing kinase activity. Interacts with PHB2; this interaction may be important for myogenic differentiation. Interacts (when phosphorylated) with CLIP3/ClipR-59; this interaction promotes cell membrane localization. Interacts with WDFY2 (via WD repeats 1-3). In terms of processing, phosphorylation on Thr-309 and Ser-474 is required for full activity. Phosphorylation of the activation loop at Thr-309 by PDPK1/PDK1 is a prerequisite for full activation. Phosphorylated and activated by PDPK1/PDK1 in the presence of phosphatidylinositol 3,4,5-trisphosphate. Phosphorylation by mTORC2 in response to growth factors plays a key role in AKT1 activation: mTORC2 phosphorylates different sites depending on the context, such as Ser-474 or Ser-478, thereby facilitating subsequent phosphorylation of the activation loop by PDPK1/PDK1. Post-translationally, ubiquitinated; undergoes both 'Lys-48'- and 'Lys-63'-linked polyubiquitination. TRAF6-induced 'Lys-63'-linked AKT2 ubiquitination. When fully phosphorylated and translocated into the nucleus, undergoes 'Lys-48'-polyubiquitination catalyzed by TTC3, leading to its degradation by the proteasome. O-GlcNAcylation at Thr-306 and Thr-313 inhibits activating phosphorylation at Thr-309 via disrupting the interaction between AKT and PDPK1/PDK1.

The protein localises to the cytoplasm. It localises to the nucleus. Its subcellular location is the cell membrane. The protein resides in the early endosome. It carries out the reaction L-seryl-[protein] + ATP = O-phospho-L-seryl-[protein] + ADP + H(+). The catalysed reaction is L-threonyl-[protein] + ATP = O-phospho-L-threonyl-[protein] + ADP + H(+). Its activity is regulated as follows. Two specific sites, one in the kinase domain (Thr-309) and the other in the C-terminal regulatory region (Ser-474), need to be phosphorylated for its full activation. AKT2 phosphorylation of PKP1 is induced by insulin. Inhibited by Akt inhibitor MK2206. In terms of biological role, AKT2 is one of 3 closely related serine/threonine-protein kinases (AKT1, AKT2 and AKT3) called the AKT kinases, and which regulate many processes including metabolism, proliferation, cell survival, growth and angiogenesis. This is mediated through serine and/or threonine phosphorylation of a range of downstream substrates. Over 100 substrate candidates have been reported so far, but for most of them, no isoform specificity has been reported. AKT is responsible of the regulation of glucose uptake by mediating insulin-induced translocation of the SLC2A4/GLUT4 glucose transporter to the cell surface. Phosphorylation of PTPN1 at 'Ser-50' negatively modulates its phosphatase activity preventing dephosphorylation of the insulin receptor and the attenuation of insulin signaling. Phosphorylation of TBC1D4 triggers the binding of this effector to inhibitory 14-3-3 proteins, which is required for insulin-stimulated glucose transport. AKT also regulates the storage of glucose in the form of glycogen by phosphorylating GSK3A at 'Ser-21' and GSK3B at 'Ser-9', resulting in inhibition of its kinase activity. Phosphorylation of GSK3 isoforms by AKT is also thought to be one mechanism by which cell proliferation is driven. AKT also regulates cell survival via the phosphorylation of MAP3K5 (apoptosis signal-related kinase). Phosphorylation of 'Ser-83' decreases MAP3K5 kinase activity stimulated by oxidative stress and thereby prevents apoptosis. AKT mediates insulin-stimulated protein synthesis by phosphorylating TSC2 at 'Ser-939' and 'Thr-1462', thereby activating mTORC1 signaling and leading to both phosphorylation of 4E-BP1 and in activation of RPS6KB1. AKT is involved in the phosphorylation of members of the FOXO factors (Forkhead family of transcription factors), leading to binding of 14-3-3 proteins and cytoplasmic localization. In particular, FOXO1 is phosphorylated at 'Thr-24', 'Ser-256' and 'Ser-319'. FOXO3 and FOXO4 are phosphorylated on equivalent sites. AKT has an important role in the regulation of NF-kappa-B-dependent gene transcription and positively regulates the activity of CREB1 (cyclic AMP (cAMP)-response element binding protein). The phosphorylation of CREB1 induces the binding of accessory proteins that are necessary for the transcription of pro-survival genes such as BCL2 and MCL1. AKT phosphorylates 'Ser-454' on ATP citrate lyase (ACLY), thereby potentially regulating ACLY activity and fatty acid synthesis. Activates the 3B isoform of cyclic nucleotide phosphodiesterase (PDE3B) via phosphorylation of 'Ser-273', resulting in reduced cyclic AMP levels and inhibition of lipolysis. Phosphorylates PIKFYVE on 'Ser-318', which results in increased PI(3)P-5 activity. The Rho GTPase-activating protein DLC1 is another substrate and its phosphorylation is implicated in the regulation cell proliferation and cell growth. AKT plays a role as key modulator of the AKT-mTOR signaling pathway controlling the tempo of the process of newborn neurons integration during adult neurogenesis, including correct neuron positioning, dendritic development and synapse formation. Signals downstream of phosphatidylinositol 3-kinase (PI(3)K) to mediate the effects of various growth factors such as platelet-derived growth factor (PDGF), epidermal growth factor (EGF), insulin and insulin-like growth factor I (IGF-I). AKT mediates the antiapoptotic effects of IGF-I. Essential for the SPATA13-mediated regulation of cell migration and adhesion assembly and disassembly. May be involved in the regulation of the placental development. In response to lysophosphatidic acid stimulation, inhibits the ciliogenesis cascade. In this context, phosphorylates WDR44, hence stabilizing its interaction with Rab11 and preventing the formation of the ciliogenic Rab11-FIP3-RAB3IP complex. Also phosphorylates RAB3IP/Rabin8, thus may affect RAB3IP guanine nucleotide exchange factor (GEF) activity toward Rab8, which is important for cilia growth. Phosphorylates PKP1, facilitating its interaction with YWHAG and translocation to the nucleus, ultimately resulting in a reduction in keratinocyte intercellular adhesion. Phosphorylation of PKP1 increases PKP1 protein stability, translocation to the cytoplasm away from desmosome plaques and PKP1-driven cap-dependent translation. Several AKT2-specific substrates have been identified, including ANKRD2, C2CD5, CLK2 and PITX2. May play a role in myoblast differentiation. In this context, may act through PITX2 phosphorylation. Unphosphorylated PITX2 associates with an ELAVL1/HuR-containing complex, which stabilizes cyclin mRNA and ensuring cell proliferation. Phosphorylation by AKT2 impairs this association, leading to CCND1 mRNA destabilization and progression towards differentiation. Also involved in the negative regulation of myogenesis in response to stress conditions. In this context, acts by phosphorylating ANKRD2. May also be a key regulator of glucose uptake. Regulates insulin-stimulated glucose transport by the increase of glucose transporter GLUT4 translocation from intracellular stores to the plasma membrane. In this context, acts by phosphorylating C2CD5/CDP138 on 'Ser-197' in insulin-stimulated adipocytes. Through the phosphorylation of CLK2 on 'Thr-343', involved in insulin-regulated suppression of hepatic gluconeogenesis. The chain is RAC-beta serine/threonine-protein kinase (Akt2) from Mus musculus (Mouse).